The chain runs to 458 residues: tRNA modification GTPase MnmE (458 aa).

3 residues coordinate (6S)-5-formyl-5,6,7,8-tetrahydrofolate: arginine 23, glutamate 87, and arginine 126. Residues 224-380 (GLSMVIVGKP…LKSKIKDLFF (157 aa)) enclose the TrmE-type G domain. Asparagine 234 serves as a coordination point for K(+). Residues 234–239 (NVGKSS), 253–259 (TDIAGTT), and 278–281 (DTAG) each bind GTP. Mg(2+) is bound at residue serine 238. K(+)-binding residues include threonine 253, isoleucine 255, and threonine 258. Residue threonine 259 participates in Mg(2+) binding. Residue lysine 458 participates in (6S)-5-formyl-5,6,7,8-tetrahydrofolate binding.

Belongs to the TRAFAC class TrmE-Era-EngA-EngB-Septin-like GTPase superfamily. TrmE GTPase family. As to quaternary structure, homodimer. Heterotetramer of two MnmE and two MnmG subunits. K(+) serves as cofactor.

It is found in the cytoplasm. In terms of biological role, exhibits a very high intrinsic GTPase hydrolysis rate. Involved in the addition of a carboxymethylaminomethyl (cmnm) group at the wobble position (U34) of certain tRNAs, forming tRNA-cmnm(5)s(2)U34. This chain is tRNA modification GTPase MnmE, found in Clostridium perfringens (strain ATCC 13124 / DSM 756 / JCM 1290 / NCIMB 6125 / NCTC 8237 / Type A).